The primary structure comprises 259 residues: Deoxyribose-phosphate aldolase (259 aa).

The active-site Proton donor/acceptor is the aspartate 102. Catalysis depends on lysine 167, which acts as the Schiff-base intermediate with acetaldehyde. Catalysis depends on lysine 201, which acts as the Proton donor/acceptor.

It belongs to the DeoC/FbaB aldolase family. DeoC type 2 subfamily.

It is found in the cytoplasm. The enzyme catalyses 2-deoxy-D-ribose 5-phosphate = D-glyceraldehyde 3-phosphate + acetaldehyde. It participates in carbohydrate degradation; 2-deoxy-D-ribose 1-phosphate degradation; D-glyceraldehyde 3-phosphate and acetaldehyde from 2-deoxy-alpha-D-ribose 1-phosphate: step 2/2. In terms of biological role, catalyzes a reversible aldol reaction between acetaldehyde and D-glyceraldehyde 3-phosphate to generate 2-deoxy-D-ribose 5-phosphate. This is Deoxyribose-phosphate aldolase from Salmonella typhi.